The primary structure comprises 379 residues: tRNA(Met) cytidine acetate ligase (379 aa).

ATP contacts are provided by residues Ile7–His20, Gly100, Asn153, and Arg178.

The protein belongs to the TmcAL family.

Its subcellular location is the cytoplasm. It carries out the reaction cytidine(34) in elongator tRNA(Met) + acetate + ATP = N(4)-acetylcytidine(34) in elongator tRNA(Met) + AMP + diphosphate. Functionally, catalyzes the formation of N(4)-acetylcytidine (ac(4)C) at the wobble position of elongator tRNA(Met), using acetate and ATP as substrates. First activates an acetate ion to form acetyladenylate (Ac-AMP) and then transfers the acetyl group to tRNA to form ac(4)C34. The chain is tRNA(Met) cytidine acetate ligase from Staphylococcus aureus (strain Mu3 / ATCC 700698).